The chain runs to 316 residues: MVLILDNDLKPLYFTLAIISASFLVKRAYQSTNIYDFFNIKKKCNPFPQSQSELVDLLHYQKRMVLNKTIVETLKFVDRKLFLENKNVENPYYDEPKPIGYNATISAPHMHALMLDLLADRIPMSNGVALDIGSGSGYVTACLGHLMGCTGRVIGVEHIPELIERSIESIKRLDSTLLDRIQFLVGDGIKGWKQLKYDIIYLGAAIESLQVARELIDQLKNGGRIVMPVGKSNDFHELMVVDKNEDGIVSIKSLGVVRFVPLTSKENQLNPKNKPNATKVTNINGEKTLIRCEIIPAPDSNSNNNIKEFENLINKK.

S-adenosyl-L-homocysteine contacts are provided by residues 103–106, His111, Ser136, 157–158, 187–188, Thr263, and Gln268; these read ATIS, EH, and DG. The active site involves Ser106.

The protein belongs to the methyltransferase superfamily. L-isoaspartyl/D-aspartyl protein methyltransferase family.

It is found in the cytoplasm. It localises to the cytosol. It carries out the reaction [protein]-L-isoaspartate + S-adenosyl-L-methionine = [protein]-L-isoaspartate alpha-methyl ester + S-adenosyl-L-homocysteine. Initiates the repair of damaged proteins by catalyzing methyl esterification of L-isoaspartyl and D-aspartyl residues produced by spontaneous isomerization and racemization of L-aspartyl and L-asparaginyl residues in aging peptides and proteins. This chain is Probable protein-L-isoaspartate O-methyltransferase (pcmA), found in Dictyostelium discoideum (Social amoeba).